The chain runs to 224 residues: UPF0758 protein Maqu_3564 (224 aa).

Residues 102-224 (PLRSPADTRR…VISLAERGLM (123 aa)) enclose the MPN domain. Zn(2+) contacts are provided by histidine 173, histidine 175, and aspartate 186. The short motif at 173–186 (HNHPSGVAEPSQAD) is the JAMM motif element.

The protein belongs to the UPF0758 family.

This Marinobacter nauticus (strain ATCC 700491 / DSM 11845 / VT8) (Marinobacter aquaeolei) protein is UPF0758 protein Maqu_3564.